A 30-amino-acid chain; its full sequence is 2-enoate reductase (30 aa).

As to quaternary structure, dodecamer; tetramer of trimers. It depends on iron-sulfur cluster as a cofactor. FAD serves as cofactor. The cofactor is FMN.

The catalysed reaction is butanoate + NAD(+) = (2E)-2-butenoate + NADH + H(+). Involved in fermentation of amino acids (Stickland reaction) such as leucine, isoleucine, valine and phenylalanine. This chain is 2-enoate reductase, found in Clostridium tyrobutyricum.